Here is a 74-residue protein sequence, read N- to C-terminus: RNA-binding protein Hfq (74 aa).

The Sm domain maps to 9-69; sequence DQFLNQLRKD…ISTFAPEKNV (61 aa).

This sequence belongs to the Hfq family. As to quaternary structure, homohexamer.

Functionally, RNA chaperone that binds small regulatory RNA (sRNAs) and mRNAs to facilitate mRNA translational regulation in response to envelope stress, environmental stress and changes in metabolite concentrations. Also binds with high specificity to tRNAs. The sequence is that of RNA-binding protein Hfq from Geobacillus sp. (strain WCH70).